Here is a 451-residue protein sequence, read N- to C-terminus: Phosphoglucosamine mutase (451 aa).

Ser101 acts as the Phosphoserine intermediate in catalysis. 4 residues coordinate Mg(2+): Ser101, Asp240, Asp242, and Asp244. Ser101 bears the Phosphoserine mark.

Belongs to the phosphohexose mutase family. The cofactor is Mg(2+). In terms of processing, activated by phosphorylation.

The catalysed reaction is alpha-D-glucosamine 1-phosphate = D-glucosamine 6-phosphate. Its function is as follows. Catalyzes the conversion of glucosamine-6-phosphate to glucosamine-1-phosphate. The chain is Phosphoglucosamine mutase from Streptococcus pyogenes serotype M2 (strain MGAS10270).